A 229-amino-acid chain; its full sequence is Potassium/proton antiporter CemA (229 aa).

Helical transmembrane passes span 6 to 26 (AFIPFFYFTSIVFLPWVISLC), 107 to 127 (ILHFSTNLISFVILSGYSFWG), and 189 to 209 (ILSGLVSTFPVILDTIFKYWI).

This sequence belongs to the CemA family.

Its subcellular location is the plastid. It localises to the chloroplast inner membrane. The catalysed reaction is K(+)(in) + H(+)(out) = K(+)(out) + H(+)(in). Functionally, contributes to K(+)/H(+) antiport activity by supporting proton efflux to control proton extrusion and homeostasis in chloroplasts in a light-dependent manner to modulate photosynthesis. Prevents excessive induction of non-photochemical quenching (NPQ) under continuous-light conditions. Indirectly promotes efficient inorganic carbon uptake into chloroplasts. The chain is Potassium/proton antiporter CemA from Draba nemorosa (Woodland whitlowgrass).